The primary structure comprises 179 residues: Large ribosomal subunit protein uL5 (179 aa).

This sequence belongs to the universal ribosomal protein uL5 family. As to quaternary structure, part of the 50S ribosomal subunit; part of the 5S rRNA/L5/L18/L25 subcomplex. Contacts the 5S rRNA and the P site tRNA. Forms a bridge to the 30S subunit in the 70S ribosome.

Functionally, this is one of the proteins that bind and probably mediate the attachment of the 5S RNA into the large ribosomal subunit, where it forms part of the central protuberance. In the 70S ribosome it contacts protein S13 of the 30S subunit (bridge B1b), connecting the 2 subunits; this bridge is implicated in subunit movement. Contacts the P site tRNA; the 5S rRNA and some of its associated proteins might help stabilize positioning of ribosome-bound tRNAs. This chain is Large ribosomal subunit protein uL5, found in Herminiimonas arsenicoxydans.